Reading from the N-terminus, the 115-residue chain is NADH-ubiquinone oxidoreductase chain 3 (115 aa).

The next 3 membrane-spanning stretches (helical) occupy residues 4-24, 55-75, and 87-107; these read LTVL…AFWL, FFLV…LLPL, and MMLT…YEWM.

This sequence belongs to the complex I subunit 3 family. As to quaternary structure, core subunit of respiratory chain NADH dehydrogenase (Complex I) which is composed of 45 different subunits. Interacts with TMEM186. Interacts with TMEM242.

The protein localises to the mitochondrion inner membrane. It catalyses the reaction a ubiquinone + NADH + 5 H(+)(in) = a ubiquinol + NAD(+) + 4 H(+)(out). Its function is as follows. Core subunit of the mitochondrial membrane respiratory chain NADH dehydrogenase (Complex I) which catalyzes electron transfer from NADH through the respiratory chain, using ubiquinone as an electron acceptor. Essential for the catalytic activity of complex I. The polypeptide is NADH-ubiquinone oxidoreductase chain 3 (Peromyscus slevini (Slevin's mouse)).